The chain runs to 96 residues: Uteroglobin (96 aa).

The first 19 residues, 1–19 (MKIAITITVLMLSICCSSA), serve as a signal peptide directing secretion.

This sequence belongs to the secretoglobin family. Antiparallel homodimer; disulfide-linked. Interaction with LMBR1L is controversial. In terms of tissue distribution, club cells (nonciliated cells of the surface epithelium of the pulmonary airways).

The protein resides in the secreted. Functionally, binds phosphatidylcholine, phosphatidylinositol, polychlorinated biphenyls (PCB) and weakly progesterone, potent inhibitor of phospholipase A2. This Rattus norvegicus (Rat) protein is Uteroglobin (Scgb1a1).